The sequence spans 636 residues: Rust resistance kinase Lr10 (636 aa).

The first 24 residues, 1–24 (MSKLLVIALLLLPLINHGIYLATA), serve as a signal peptide directing secretion. The Extracellular segment spans residues 25–276 (WDDQDFFKYC…MPDPHGSHIK (252 aa)). N-linked (GlcNAc...) asparagine glycans are attached at residues asparagine 56, asparagine 177, and asparagine 222. The helical transmembrane segment at 277–297 (VIAATSSVAAFVALLLTVATV) threads the bilayer. At 298 to 636 (LYLSLKTRYN…FVSSENELMS (339 aa)) the chain is on the cytoplasmic side. The Protein kinase domain maps to 339–628 (RRFKEKVGQG…SLQMPPKPFV (290 aa)). Residues 345-353 (VGQGGFGSV) and lysine 367 each bind ATP. Aspartate 466 acts as the Proton acceptor in catalysis.

This sequence belongs to the protein kinase superfamily. Ser/Thr protein kinase family. Specifically expressed in the aerial parts of the plant.

The protein resides in the cell membrane. The catalysed reaction is L-seryl-[protein] + ATP = O-phospho-L-seryl-[protein] + ADP + H(+). The enzyme catalyses L-threonyl-[protein] + ATP = O-phospho-L-threonyl-[protein] + ADP + H(+). In Triticum aestivum (Wheat), this protein is Rust resistance kinase Lr10.